The primary structure comprises 68 residues: DNA-directed RNA polymerase subunit Rpo10 (68 aa).

4 residues coordinate Zn(2+): cysteine 7, cysteine 10, cysteine 44, and cysteine 45.

Belongs to the archaeal Rpo10/eukaryotic RPB10 RNA polymerase subunit family. Part of the RNA polymerase complex. Zn(2+) serves as cofactor.

It is found in the cytoplasm. It carries out the reaction RNA(n) + a ribonucleoside 5'-triphosphate = RNA(n+1) + diphosphate. Its function is as follows. DNA-dependent RNA polymerase (RNAP) catalyzes the transcription of DNA into RNA using the four ribonucleoside triphosphates as substrates. This Methanococcus maripaludis (strain C5 / ATCC BAA-1333) protein is DNA-directed RNA polymerase subunit Rpo10.